The sequence spans 505 residues: Probable cytochrome P450 28a5 (505 aa).

C450 contacts heme.

This sequence belongs to the cytochrome P450 family. Requires heme as cofactor.

The protein localises to the endoplasmic reticulum membrane. It is found in the microsome membrane. Functionally, may be involved in the metabolism of insect hormones and in the breakdown of synthetic insecticides. This chain is Probable cytochrome P450 28a5 (Cyp28a5), found in Drosophila melanogaster (Fruit fly).